The following is a 140-amino-acid chain: Ribosome maturation factor RimP (140 aa).

Belongs to the RimP family.

It localises to the cytoplasm. Required for maturation of 30S ribosomal subunits. This Campylobacter jejuni subsp. doylei (strain ATCC BAA-1458 / RM4099 / 269.97) protein is Ribosome maturation factor RimP.